The chain runs to 99 residues: Prostate and testis expressed protein 14 (99 aa).

Residues 1 to 21 form the signal peptide; sequence MEKYLLLLLLGIFLRVGFLQA. One can recognise a UPAR/Ly6 domain in the interval 22 to 99; that stretch reads LTCVSCGRLN…CDHQNLCNKP (78 aa). Intrachain disulfides connect cysteine 24–cysteine 51, cysteine 27–cysteine 36, cysteine 43–cysteine 69, cysteine 73–cysteine 89, and cysteine 90–cysteine 96. N-linked (GlcNAc...) asparagine glycosylation is present at asparagine 31. N-linked (GlcNAc...) asparagine glycosylation occurs at asparagine 75.

This sequence belongs to the PATE family. Monomer. In terms of processing, glycosylated. Predominantly expressed in the seminal vesicles. Expressed in prostate, and to a lesser extent in the cauda epididymis.

It is found in the secreted. This is Prostate and testis expressed protein 14 from Mus musculus (Mouse).